The following is a 675-amino-acid chain: Potassium-transporting ATPase ATP-binding subunit (675 aa).

4 helical membrane-spanning segments follow: residues 34 to 54, 65 to 85, 216 to 236, and 245 to 265; these read IMFV…FPDI, LITI…SEAF, IALF…IVTL, and LILP…TTIG. The active-site 4-aspartylphosphate intermediate is the D304. ATP-binding positions include D341, E345, 372–379, and K390; that span reads FTAETRMS. 2 residues coordinate Mg(2+): D513 and D517. 3 consecutive transmembrane segments (helical) span residues 569–591, 611–631, and 644–664; these read ALTT…ALMM, AIIS…PIAM, and IFIN…FLGI.

Belongs to the cation transport ATPase (P-type) (TC 3.A.3) family. Type IA subfamily. As to quaternary structure, the system is composed of three essential subunits: KdpA, KdpB and KdpC.

The protein localises to the cell membrane. The catalysed reaction is K(+)(out) + ATP + H2O = K(+)(in) + ADP + phosphate + H(+). In terms of biological role, part of the high-affinity ATP-driven potassium transport (or Kdp) system, which catalyzes the hydrolysis of ATP coupled with the electrogenic transport of potassium into the cytoplasm. This subunit is responsible for energy coupling to the transport system and for the release of the potassium ions to the cytoplasm. This is Potassium-transporting ATPase ATP-binding subunit from Staphylococcus aureus (strain Newman).